A 397-amino-acid chain; its full sequence is Monooxygenase 1 (397 aa).

This sequence belongs to the 3-hydroxybenzoate 6-hydroxylase family. In terms of assembly, monomer. FAD serves as cofactor. Expressed in seedlings, roots, leaves, flowers and siliques.

The sequence is that of Monooxygenase 1 from Arabidopsis thaliana (Mouse-ear cress).